The primary structure comprises 175 residues: MSIDDLKSKIPDFAKDVRLNLSSMASDETLTPQQKYGLFVACGIASRNADVRKALVAEAAAKVDASVIQAAKSAASIMGMNNVYYRFVHLATNKDYRTMPAKLRMNVIGNPGVDKIDFELWSLAVSAINGCGMCIDAHEDVLRKANVTSETIQTAVRFASIIQSVAIALEAADTE.

Cys-131 (proton donor) is an active-site residue. Residues Cys-131 and Cys-134 are joined by a disulfide bond. Cys-134 functions as the Cysteine sulfenic acid (-SOH) intermediate in the catalytic mechanism.

Belongs to the AhpD family.

The enzyme catalyses N(6)-[(R)-dihydrolipoyl]-L-lysyl-[lipoyl-carrier protein] + a hydroperoxide = N(6)-[(R)-lipoyl]-L-lysyl-[lipoyl-carrier protein] + an alcohol + H2O. In terms of biological role, antioxidant protein with alkyl hydroperoxidase activity. Required for the reduction of the AhpC active site cysteine residues and for the regeneration of the AhpC enzyme activity. The chain is Alkyl hydroperoxide reductase AhpD from Brucella anthropi (strain ATCC 49188 / DSM 6882 / CCUG 24695 / JCM 21032 / LMG 3331 / NBRC 15819 / NCTC 12168 / Alc 37) (Ochrobactrum anthropi).